A 136-amino-acid polypeptide reads, in one-letter code: Large ribosomal subunit protein uL16 (136 aa).

The protein belongs to the universal ribosomal protein uL16 family. Part of the 50S ribosomal subunit.

Its function is as follows. Binds 23S rRNA and is also seen to make contacts with the A and possibly P site tRNAs. The chain is Large ribosomal subunit protein uL16 from Shewanella sediminis (strain HAW-EB3).